The sequence spans 177 residues: MSRVAKMPVTIPAGVDVSVKDDQIAVKGAGGTLSLAQNVLVKVTSSDGKLRFEPANESRQANAMSGTLRQLVNNMVLGVSKGFEKKLSLVGVGYKAAAAGAKLNLVVGYSHPVNIDMPAGITVTTPTPTEVVVKGADRQRVGQIAAEIRAVRPPEPYKGKGIRYADEKITIKETKKK.

This sequence belongs to the universal ribosomal protein uL6 family. Part of the 50S ribosomal subunit.

In terms of biological role, this protein binds to the 23S rRNA, and is important in its secondary structure. It is located near the subunit interface in the base of the L7/L12 stalk, and near the tRNA binding site of the peptidyltransferase center. This chain is Large ribosomal subunit protein uL6, found in Verminephrobacter eiseniae (strain EF01-2).